Reading from the N-terminus, the 497-residue chain is Cytochrome P450 2D19 (497 aa).

Cys-443 is a heme binding site.

Belongs to the cytochrome P450 family. Requires heme as cofactor.

The protein resides in the endoplasmic reticulum membrane. Its subcellular location is the microsome membrane. It catalyses the reaction an organic molecule + reduced [NADPH--hemoprotein reductase] + O2 = an alcohol + oxidized [NADPH--hemoprotein reductase] + H2O + H(+). Functionally, responsible for the metabolism of many drugs and environmental chemicals that it oxidizes. This Callithrix jacchus (White-tufted-ear marmoset) protein is Cytochrome P450 2D19 (CYP2D19).